The primary structure comprises 128 residues: Translation initiation factor 5A (128 aa).

A Hypusine modification is found at lysine 35.

The protein belongs to the eIF-5A family.

Its subcellular location is the cytoplasm. Functions by promoting the formation of the first peptide bond. The sequence is that of Translation initiation factor 5A from Methanosarcina barkeri (strain Fusaro / DSM 804).